We begin with the raw amino-acid sequence, 263 residues long: MARGPKKHLKRVAAPKHWMLDKLTGVFAPRPSTGPHKLRECLPLIIFLRNRLKYALTGDEVKKICMQRFIKVDGKVRTDITYPAGFMDVISIEKTGENFRLIYDVKGRFTVHRITNEEAKYKLCKVKKILIGTKGIPHLVTHDARTIRYPDPMIKANDTVRIDLETGKITEFIKFDTGNLCMVTGGANLGRIGVITNRERHPGSFDVVHVKDSTGNSFATRLSNIFVIGKGNKAWVSIPRGKGIRLTIAEERDKRLAAKQSSS.

The S4 RNA-binding domain maps to 42–104 (LPLIIFLRNR…TGENFRLIYD (63 aa)).

It belongs to the eukaryotic ribosomal protein eS4 family.

In Ictalurus punctatus (Channel catfish), this protein is Small ribosomal subunit protein eS4 (rps4).